Here is a 599-residue protein sequence, read N- to C-terminus: Adenine deaminase (599 aa).

The protein belongs to the metallo-dependent hydrolases superfamily. Adenine deaminase family. The cofactor is Mn(2+).

It catalyses the reaction adenine + H2O + H(+) = hypoxanthine + NH4(+). The sequence is that of Adenine deaminase from Clostridium botulinum (strain ATCC 19397 / Type A).